A 333-amino-acid polypeptide reads, in one-letter code: Mitochondrial glycine transporter (333 aa).

The tract at residues 1–25 is disordered; the sequence is MTNAATDKSVASVARDVSTGKPGKS. Solcar repeat units lie at residues 26–109, 127–220, and 236–319; these read PDAA…MRAA, LLPM…FKND, and RSSV…LIKS. 6 helical membrane-spanning segments follow: residues 32–57, 84–110, 133–158, 195–218, 240–266, and 294–312; these read LLSG…TRLQ, GAVP…RAAV, LATG…TRFE, GSVA…EGFK, INSS…KTRL, and GLSL…SWCI.

This sequence belongs to the mitochondrial carrier (TC 2.A.29) family. SLC25A38 subfamily.

It is found in the mitochondrion inner membrane. The catalysed reaction is glycine(in) = glycine(out). Its function is as follows. Mitochondrial glycine transporter that imports glycine into the mitochondrial matrix. Plays an important role in providing glycine for the first enzymatic step in heme biosynthesis, the condensation of glycine with succinyl-CoA to produce 5-aminolevulinate (ALA) in the mitochondrial matrix. The chain is Mitochondrial glycine transporter from Scheffersomyces stipitis (strain ATCC 58785 / CBS 6054 / NBRC 10063 / NRRL Y-11545) (Yeast).